The following is a 284-amino-acid chain: MKQKVVSIGDINVANDLPFVLFGGMNVLESRDLAMRICEHYVTVTQKLGIPYVFKASFDKANRSSINSYRGPGLEEGMKIFQELKQTFGVKVITDVHEASQAQPVAEVVDVIQLPAFLARQTDLVEAMAKTGAVINVKKPQFVSPGQMGNIVDKFIEGGNDQIILCDRGANFGYDNLVVDMLGFSVMKKVSNNSPVIFDVTHALQCRDPFGAASSGRRGQVTELARAGMATGIAGLFIEAHPDPANAKCDGPSALPLDKLEPFLKQIKAIDDLVKSFDELDTSN.

The protein belongs to the KdsA family.

Its subcellular location is the cytoplasm. It catalyses the reaction D-arabinose 5-phosphate + phosphoenolpyruvate + H2O = 3-deoxy-alpha-D-manno-2-octulosonate-8-phosphate + phosphate. It functions in the pathway carbohydrate biosynthesis; 3-deoxy-D-manno-octulosonate biosynthesis; 3-deoxy-D-manno-octulosonate from D-ribulose 5-phosphate: step 2/3. It participates in bacterial outer membrane biogenesis; lipopolysaccharide biosynthesis. In Enterobacter sp. (strain 638), this protein is 2-dehydro-3-deoxyphosphooctonate aldolase.